A 393-amino-acid chain; its full sequence is S-adenosylmethionine synthase 1 (393 aa).

Residue Glu-9 coordinates Mg(2+). His-15 contacts ATP. Glu-43 serves as a coordination point for K(+). L-methionine contacts are provided by Glu-56 and Gln-99. ATP-binding positions include 167–169 (DGK), 235–238 (SGRF), Asp-246, 252–253 (RK), Ala-269, Lys-273, and Lys-277. Asp-246 contributes to the L-methionine binding site. Lys-277 serves as a coordination point for L-methionine.

It belongs to the AdoMet synthase family. Homotetramer. The cofactor is Mn(2+). Requires Mg(2+) as cofactor. Co(2+) serves as cofactor. It depends on K(+) as a cofactor.

The protein resides in the cytoplasm. The catalysed reaction is L-methionine + ATP + H2O = S-adenosyl-L-methionine + phosphate + diphosphate. It participates in amino-acid biosynthesis; S-adenosyl-L-methionine biosynthesis; S-adenosyl-L-methionine from L-methionine: step 1/1. Functionally, catalyzes the formation of S-adenosylmethionine from methionine and ATP. The reaction comprises two steps that are both catalyzed by the same enzyme: formation of S-adenosylmethionine (AdoMet) and triphosphate, and subsequent hydrolysis of the triphosphate. The polypeptide is S-adenosylmethionine synthase 1 (METK1) (Picea sitchensis (Sitka spruce)).